A 161-amino-acid polypeptide reads, in one-letter code: Type IV major fimbrial protein FimA (161 aa).

Residues 1–7 (MKSLQKG) constitute a propeptide, leader sequence. Phe8 bears the N-methylphenylalanine mark. Residues 8–28 (FTLIELMIVVAIIGILAAFAI) form a helical membrane-spanning segment. The cysteines at positions 63 and 106 are disulfide-linked.

It belongs to the N-Me-Phe pilin family. The pili are polar flexible filaments of about 5.4 nanometers diameter and 2.5 micrometers average length; they consist of only a single polypeptide chain arranged in a helical configuration of five subunits per turn in the assembled pilus.

It localises to the fimbrium. The protein resides in the membrane. Its function is as follows. Major component of the type IV fimbriae that plays an essential role in twitching motility, natural transformation, and protease secretion. The polypeptide is Type IV major fimbrial protein FimA (fimA) (Dichelobacter nodosus (Bacteroides nodosus)).